Reading from the N-terminus, the 454-residue chain is tRNA-2-methylthio-N(6)-dimethylallyladenosine synthase (454 aa).

The region spanning 6-122 is the MTTase N-terminal domain; sequence RRYHITTYGC…LQDLLEQVAS (117 aa). [4Fe-4S] cluster-binding residues include cysteine 15, cysteine 51, cysteine 85, cysteine 157, cysteine 161, and cysteine 164. A Radical SAM core domain is found at 143 to 384; it reads RDSAVTAWVN…GVCAELRSQR (242 aa). The region spanning 383 to 447 is the TRAM domain; it reads QRYANRIEEV…SFSLTGEPLS (65 aa).

Belongs to the methylthiotransferase family. MiaB subfamily. In terms of assembly, monomer. Requires [4Fe-4S] cluster as cofactor.

Its subcellular location is the cytoplasm. The catalysed reaction is N(6)-dimethylallyladenosine(37) in tRNA + (sulfur carrier)-SH + AH2 + 2 S-adenosyl-L-methionine = 2-methylsulfanyl-N(6)-dimethylallyladenosine(37) in tRNA + (sulfur carrier)-H + 5'-deoxyadenosine + L-methionine + A + S-adenosyl-L-homocysteine + 2 H(+). In terms of biological role, catalyzes the methylthiolation of N6-(dimethylallyl)adenosine (i(6)A), leading to the formation of 2-methylthio-N6-(dimethylallyl)adenosine (ms(2)i(6)A) at position 37 in tRNAs that read codons beginning with uridine. The chain is tRNA-2-methylthio-N(6)-dimethylallyladenosine synthase from Acaryochloris marina (strain MBIC 11017).